The primary structure comprises 122 residues: Large ribosomal subunit protein uL14 (122 aa).

This sequence belongs to the universal ribosomal protein uL14 family. Part of the 50S ribosomal subunit. Forms a cluster with proteins L3 and L19. In the 70S ribosome, L14 and L19 interact and together make contacts with the 16S rRNA in bridges B5 and B8.

Functionally, binds to 23S rRNA. Forms part of two intersubunit bridges in the 70S ribosome. The chain is Large ribosomal subunit protein uL14 from Francisella philomiragia subsp. philomiragia (strain ATCC 25017 / CCUG 19701 / FSC 153 / O#319-036).